A 149-amino-acid chain; its full sequence is Urease accessory protein UreE (149 aa).

The protein belongs to the UreE family.

Its subcellular location is the cytoplasm. Involved in urease metallocenter assembly. Binds nickel. Probably functions as a nickel donor during metallocenter assembly. This is Urease accessory protein UreE from Synechococcus sp. (strain JA-3-3Ab) (Cyanobacteria bacterium Yellowstone A-Prime).